Here is a 466-residue protein sequence, read N- to C-terminus: Argininosuccinate lyase (466 aa).

Positions 27, 114, and 159 each coordinate 2-(N(omega)-L-arginino)succinate. Histidine 160 functions as the Proton acceptor in the catalytic mechanism. The active-site Proton donor is the serine 281. 2-(N(omega)-L-arginino)succinate is bound by residues asparagine 289, tyrosine 321, glutamine 326, and lysine 329.

Belongs to the lyase 1 family. Argininosuccinate lyase subfamily. As to quaternary structure, homotetramer. The N-terminus is blocked. As to expression, eye lens.

It carries out the reaction 2-(N(omega)-L-arginino)succinate = fumarate + L-arginine. It functions in the pathway amino-acid biosynthesis; L-arginine biosynthesis; L-arginine from L-ornithine and carbamoyl phosphate: step 3/3. Functionally, delta crystallin, the principal crystallin in embryonic lens, is found only in birds and reptiles. This protein also functions as an enzymatically active argininosuccinate lyase, but it has a low activity. The protein is Argininosuccinate lyase (ASL) of Columba livia (Rock dove).